The primary structure comprises 438 residues: Coenzyme A disulfide reductase (438 aa).

8 to 33 provides a ligand contact to FAD; the sequence is GAVAGGATCASQIRRLDKESDIIIFE. Positions 15, 19, 22, 39, and 42 each coordinate substrate. The active-site Nucleophile is the cysteine 43. Cysteine 43 serves as the catalytic Redox-active. Residue lysine 71 coordinates substrate. An NADP(+)-binding site is contributed by 151 to 166; sequence VLVVGAGYVSLEVLEN. 267-277 serves as a coordination point for FAD; the sequence is TNVPNIYAIGD. Histidine 299 lines the substrate pocket. Tyrosine 419 contacts FAD. Lysine 427 contacts substrate.

Belongs to the class-III pyridine nucleotide-disulfide oxidoreductase family. In terms of assembly, homodimer. FAD serves as cofactor.

The catalysed reaction is NADP(+) + 2 CoA = CoA-disulfide + NADPH + H(+). Its function is as follows. Catalyzes specifically the NADPH-dependent reduction of coenzyme A disulfide. Is also active with other disulfide substrates containing at least one 4'-phosphopantethienyl moiety such as 4,4'-diphosphopantethine, but is not able to reduce oxidized glutathione, cystine, pantethine, or H(2)O(2). The protein is Coenzyme A disulfide reductase (cdr) of Staphylococcus aureus (strain NCTC 8325 / PS 47).